Reading from the N-terminus, the 520-residue chain is Chaperone Ric-8B (520 aa).

S468 bears the Phosphoserine mark. T473 carries the post-translational modification Phosphothreonine.

It belongs to the synembryn family. As to quaternary structure, interacts with GDP-bound G(s) G-alpha proteins GNAL and GNAS. Does not interact with G-alpha proteins when they are in complex with subunits beta and gamma.

It localises to the cytoplasm. It is found in the cell cortex. Chaperone that specifically binds and folds nascent G(s) G-alpha proteins (GNAS and GNAL) prior to G protein heterotrimer formation, promoting their association with the plasma membrane. Also acts as a guanine nucleotide exchange factor (GEF) for G(s) proteins by stimulating exchange of bound GDP for free GTP. Acts as an important component for odorant signal transduction by mediating GNAL (G(olf)-alpha) folding, thereby promoting-dependent cAMP accumulation in olfactory sensory neurons. This is Chaperone Ric-8B (Ric8b) from Rattus norvegicus (Rat).